The primary structure comprises 396 residues: Probable glucan endo-1,6-beta-glucosidase B (396 aa).

An N-terminal signal peptide occupies residues 1 to 17 (MIRRLAAFSALSGLATA). Residue Asn30 is glycosylated (N-linked (GlcNAc...) asparagine). Glu219 functions as the Proton donor in the catalytic mechanism. N-linked (GlcNAc...) asparagine glycosylation occurs at Asn272. The active-site Nucleophile is the Glu320.

Belongs to the glycosyl hydrolase 5 (cellulase A) family.

It localises to the secreted. It carries out the reaction Random hydrolysis of (1-&gt;6)-linkages in (1-&gt;6)-beta-D-glucans.. In terms of biological role, beta-glucanases participate in the metabolism of beta-glucan, the main structural component of the cell wall. Acts on lutean, pustulan and 1,6-oligo-beta-D-glucosides. The chain is Probable glucan endo-1,6-beta-glucosidase B (exgB) from Aspergillus fumigatus (strain ATCC MYA-4609 / CBS 101355 / FGSC A1100 / Af293) (Neosartorya fumigata).